A 719-amino-acid polypeptide reads, in one-letter code: Fusicoccadiene synthase (719 aa).

The segment at 1–334 (MEFKYSEVVE…RYNPDVSFNK (334 aa)) is fusicocca-2,10(14)-diene synthase. Mg(2+) is bound by residues Asp92 and Asp96. A geranylgeranyl diphosphate synthase region spans residues 335 to 719 (TQLEWMRQGL…MRLLLELLRV (385 aa)). The disordered stretch occupies residues 358 to 404 (EIDSDESAVSPTADESDSTEDSLGSGSRQDSSLSTGLSLSPVHSNEG). The segment covering 378 to 400 (DSLGSGSRQDSSLSTGLSLSPVH) has biased composition (polar residues). Residues Lys435, Arg438, and His467 each coordinate isopentenyl diphosphate. Mg(2+)-binding residues include Asp474 and Asp478. Arg483 contributes to the dimethylallyl diphosphate binding site. Residue Arg484 participates in isopentenyl diphosphate binding. 6 residues coordinate dimethylallyl diphosphate: Lys561, Thr562, Gln602, Asn609, Lys619, and Lys629.

In the N-terminal section; belongs to the terpene synthase family. The protein in the C-terminal section; belongs to the FPP/GGPP synthase family. In terms of assembly, hexamer.

The catalysed reaction is geranylgeranyl diphosphate = fusicocca-2,10(14)-diene + diphosphate. It catalyses the reaction isopentenyl diphosphate + (2E,6E)-farnesyl diphosphate = (2E,6E,10E)-geranylgeranyl diphosphate + diphosphate. It participates in mycotoxin biosynthesis. Multifunctional diterpene synthase; part of the 2 gene clusters that mediate the biosynthesis of fusicoccins, diterpene glucosides that display phytohormone-like activity and function as potent activators of plasma membrane H(+)-ATPases in plants by modifying 14-3-3 proteins and cause the plant disease constriction canker. The first step in the pathway is performed by the fusicoccadiene synthase PaFS that possesses both prenyl transferase and terpene cyclase activity, converting isopentenyl diphosphate and dimethylallyl diphosphate into geranylgeranyl diphosphate (GGDP) and successively converting GGDP into fusicocca-2,10(14)-diene, a precursor for fusicoccin H. Fusicoccadiene synthase is an allosteric enzyme for GGPP cyclization that generates 64% fusicoccadiene, 9% delta-araneosene, and one additional unidentified diterpene product, when incubated with GGPP. In the absence of isopentenyl diphosphate (IPP), PaFS can also solvolyze the shorter chain geranyl diphosphate (GPP) and farnesyl diphosphate (FPP) as alternative substrates to yield predominantly acyclic products. FPP is converted to farnesol (60.5%), nerolidol (14.0%), and farnesene (14.0%), while GPP is converted to a mixture of geraniol (59.5%) and linalool (35.0%). The second step is the oxidation at the C-8 position by the cytochrome P450 monooxygenase PaP450-2 to yield fusicocca-2,10(14)-diene-8-beta-ol. The cytochrome P450 monooxygenase PaP450-1 then catalyzes the hydroxylation at the C-16 position to produce fusicocca-2,10(14)-diene-8-beta,16-diol. The dioxygenase fc-dox then catalyzes the 16-oxydation of fusicocca-2,10(14)-diene-8-beta,16-diol to yield an aldehyde (8-beta-hydroxyfusicocca-1,10(14)-dien-16-al). The short-chain dehydrogenase/reductase fc-sdr catalyzes the reduction of the aldehyde to yield fusicocca-1,10(14)-diene-8-beta,16-diol. The next step is the hydroxylation at C-9 performed by the cytochrome P450 monooxygenase PaP450-3 that leads to fusicoccin H aglycon which is glycosylated to fusicoccin H by the O-glycosyltransferase PAGT. Hydroxylation at C-12 by the cytochrome P450 monooxygenase PaP450-4 leads then to the production of fusicoccin Q and is followed by methylation by the O-methyltransferase PAMT to yield fusicoccin P. Fusicoccin P is further converted to fusicoccin J via prenylation by the O-glucose prenyltransferase PaPT. Cytochrome P450 monooxygenase PaP450-5 then performs hydroxylation at C-19 to yield dideacetyl-fusicoccin A which is acetylated to 3'-O-deacetyl-fusicoccin A by the O-acetyltransferase PaAT-2. Finally, a another acetylation by the O-acetyltransferase PaAT-1 yields fusicoccin A. This Phomopsis amygdali (Fusicoccum amygdali) protein is Fusicoccadiene synthase.